Consider the following 517-residue polypeptide: Splicing factor U2AF 59 kDa subunit (517 aa).

Residues methionine 1–arginine 13 show a composition bias toward low complexity. Residues methionine 1–isoleucine 112 are disordered. A compositionally biased stretch (basic and acidic residues) spans aspartate 20–serine 89. 2 RRM domains span residues aspartate 310 to valine 388 and arginine 418 to glutamate 509.

The protein belongs to the splicing factor SR family. Forms a heterodimer with the U2AF small subunit. Can also form a homodimer. U2AF large subunit (U2AF59), U2AF small subunit (U2AF23) and SF1 (bpb1) interact to form a complex required for complex A formation. Interacts with wat1/pop3.

The protein localises to the nucleus. Its function is as follows. Necessary for the splicing of pre-mRNA. The SF1-U2AF59-U2AF23 complex has a role in the recognition of the branch site (5'-UACUAAC-3'), the pyrimidine tract and the 3'-splice site at the 3'-end of introns. The polypeptide is Splicing factor U2AF 59 kDa subunit (prp2) (Schizosaccharomyces pombe (strain 972 / ATCC 24843) (Fission yeast)).